The primary structure comprises 33 residues: MSDINATRLPIILAPIIPCINDDVNSTLTSGER.

Residues 1 to 10 (MSDINATRLP) constitute a propeptide that is removed on maturation. Residues 11–18 (IILAPIIP) constitute a cross-link (cyclopeptide (Ile-Pro)). The propeptide occupies 19–33 (CINDDVNSTLTSGER).

Belongs to the MSDIN fungal toxin family. Post-translationally, processed by the macrocyclase-peptidase enzyme POPB to yield a toxic cyclic octapeptide. POPB first removes 10 residues from the N-terminus. Conformational trapping of the remaining peptide forces the enzyme to release this intermediate rather than proceed to macrocyclization. The enzyme rebinds the remaining peptide in a different conformation and catalyzes macrocyclization of the N-terminal 8 residues.

Probable toxin that belongs to the MSDIN-like toxin family responsible for a large number of food poisoning cases and deaths. This chain is MSDIN-like toxin proprotein 2, found in Amanita phalloides (Death cap).